Here is a 444-residue protein sequence, read N- to C-terminus: uncharacterized protein (444 aa).

Positions 1-11 (MASSAGRDKLR) are enriched in basic and acidic residues. The disordered stretch occupies residues 1 to 35 (MASSAGRDKLRSRGQRVFAFGSSTPRDLSHMSKVP).

This is an uncharacterized protein from Caenorhabditis elegans.